We begin with the raw amino-acid sequence, 98 residues long: MANNQAAKKRIEIAERNRLRNRTYKSALRTLMKRCFVACEAYSKEPGDAAKATVSASMNAAFSKIDKAVKVGVLHRNNGAHQKSRLSATVRQVLEPSS.

Belongs to the bacterial ribosomal protein bS20 family.

Binds directly to 16S ribosomal RNA. The sequence is that of Small ribosomal subunit protein bS20 from Parasynechococcus marenigrum (strain WH8102).